The chain runs to 650 residues: MNPDQYSQAIERLNAWAHAYYVLDAPLATDEEYDQLYHEALAFERQNPERIHPASPTQRIGGAPLEGFQKASHLERMWSLEDVFDFGELKSWAERLYKQFPHATFVCDPKFDGASLNLLYEEGRLVRAATRGDGLIGEDVTQNARTIPSIPLSIPLLERIEIRGEVVIPKEDFEKLQEERLRENESPFANPRNAAAGSLRQLDPAITAKRKLRFIPWGVGAHPFKTGSFFEIMKSLESYGFIRSPERTRCHNIHEIERVYALLVSERSTHPVMLDGMVVRVDEIAYQRELGYTIKAPRFACAYKFPAIEKKARLLSITLQVGRSGVVTPVANLEPVEIEGAMISRATLHNFDEIKRLDVREGDWVSLIRSGDVIPKIIQPFAHLRSGEEKPLSRPTHCPECGSELLVEEVLIKCQNLSCPARIKNSLIHFASKKALNIDGLGEKIIEQLFEAGLIKEFEDLFSLTKESLLSLEGFKEKKAQNLLDAIQGVRGCDLWRFINALGIEHIGEGAAKKLSHAFGLAFHLQNHEAIIGLEGFGEEMAQSLLEFCRVNHERIEHLLGLIEPLAPIQLTPQDSPIAGKSFVITGTLSAPREHFVELLTSLGAKVVSSVSKKSDFLLYGESAGSKLEKARELGVRCVNEEELGEILES.

NAD(+)-binding positions include 30–34 (DEEYD), 79–80 (SL), and D108. Catalysis depends on K110, which acts as the N6-AMP-lysine intermediate. Positions 131, 165, and 304 each coordinate NAD(+). 4 residues coordinate Zn(2+): C398, C401, C414, and C419. Residues 573-650 (PQDSPIAGKS…EEELGEILES (78 aa)) enclose the BRCT domain.

This sequence belongs to the NAD-dependent DNA ligase family. LigA subfamily. Mg(2+) serves as cofactor. The cofactor is Mn(2+).

The catalysed reaction is NAD(+) + (deoxyribonucleotide)n-3'-hydroxyl + 5'-phospho-(deoxyribonucleotide)m = (deoxyribonucleotide)n+m + AMP + beta-nicotinamide D-nucleotide.. DNA ligase that catalyzes the formation of phosphodiester linkages between 5'-phosphoryl and 3'-hydroxyl groups in double-stranded DNA using NAD as a coenzyme and as the energy source for the reaction. It is essential for DNA replication and repair of damaged DNA. The polypeptide is DNA ligase (Wolinella succinogenes (strain ATCC 29543 / DSM 1740 / CCUG 13145 / JCM 31913 / LMG 7466 / NCTC 11488 / FDC 602W) (Vibrio succinogenes)).